The following is a 1118-amino-acid chain: Ubiquitin carboxyl-terminal hydrolase 8 (1118 aa).

Positions 33–116 (TKSYVHSALK…ESLKLRYEEA (84 aa)) constitute an MIT domain. Composition is skewed to basic and acidic residues over residues 120–146 (KKLE…REDG) and 158–177 (LDSK…KCET). Positions 120–177 (KKLEEKDRQEEAQRLQQKRQETGREDGGTLAKGSLENVLDSKDKTQKSNGEKNEKCET) are disordered. Ser-160 is subject to Phosphoserine. The 119-residue stretch at 195 to 313 (KNISLIIMDA…WLLCYPQYTT (119 aa)) folds into the Rhodanese domain. Phosphoserine occurs at positions 392 and 400. Residues 402-447 (KNVPQIDRTKKPAVKLPEEHRIKSESTNHEQQSPQSGKVIPDRSTK) form a disordered region. Positions 405–413 (PQIDRTKKP) match the SH3-binding motif. The segment covering 417-429 (LPEEHRIKSESTN) has biased composition (basic and acidic residues). Ser-452 is modified (phosphoserine). Positions 475–573 (KNKQEKELRE…AKKSVEDRGK (99 aa)) are enriched in basic and acidic residues. 2 disordered regions span residues 475–648 (KNKQ…GRIV) and 679–746 (YPPE…ENKP). Residue Thr-577 is modified to Phosphothreonine. A compositionally biased stretch (basic and acidic residues) spans 618-645 (TFREDTDDTERNKAQREPLTRARSEEMG). Polar residues predominate over residues 716–726 (SYSSPDITQAI). 2 positions are modified to phosphoserine: Ser-718 and Ser-719. One can recognise a USP domain in the interval 777 to 1109 (TGLRNLGNTC…AAYILFYTSL (333 aa)). Cys-786 acts as the Nucleophile in catalysis. At Thr-945 the chain carries Phosphothreonine. Catalysis depends on His-1067, which acts as the Proton acceptor.

The protein belongs to the peptidase C19 family. As to quaternary structure, forms a ternary complex with RNF128 and OTUB1. Interacts (via C-terminal UCH catalytic domain) with OTUB1 isoform 1. Interacts with STAM2 (via SH3 domain). Interacts with DNAJB3, EGFR, EPS15, RASGRF1, RNF41, YWHAE, YWHAG and YWHAZ. Interacts with NBR1, RASGRF1, RNF41 and IST1. Associates with the ESCRT-0 complex and with microtubules. Interacts with BIRC6/bruce and KIF23/MKLP1. In terms of assembly, (Microbial infection) Interacts with Zika virus non-structural protein 1. Post-translationally, phosphorylation of Ser-718 is essential for interaction with YWHAE and for cytosol localization. Undergoes dephosphorylation at Ser-718 in the M phase. Tyrosine-phosphorylated in its N-terminal half in an EGFR-dependent manner. In terms of processing, ubiquitinated. Inactive form is mostly monoubiquitinated, but polyubiquitination happens too. Ubiquitination is increased in EGF-stimulated cells. Ubiquitination of active form is undetectable, suggesting a possibility that USP8 deubiquitinates itself, thereby regulating its own function.

It is found in the cytoplasm. The protein resides in the nucleus. It localises to the endosome membrane. The protein localises to the cell membrane. The catalysed reaction is Thiol-dependent hydrolysis of ester, thioester, amide, peptide and isopeptide bonds formed by the C-terminal Gly of ubiquitin (a 76-residue protein attached to proteins as an intracellular targeting signal).. In terms of biological role, hydrolase that can remove conjugated ubiquitin from proteins and therefore plays an important regulatory role at the level of protein turnover by preventing degradation. Converts both 'Lys-48' an 'Lys-63'-linked ubiquitin chains. Catalytic activity is enhanced in the M phase. Involved in cell proliferation. Required to enter into S phase in response to serum stimulation. May regulate T-cell anergy mediated by RNF128 via the formation of a complex containing RNF128 and OTUB1. Probably regulates the stability of STAM2 and RASGRF1. Regulates endosomal ubiquitin dynamics, cargo sorting, membrane traffic at early endosomes, and maintenance of ESCRT-0 stability. The level of protein ubiquitination on endosomes is essential for maintaining the morphology of the organelle. Deubiquitinates EPS15 and controls tyrosine kinase stability. Removes conjugated ubiquitin from EGFR thus regulating EGFR degradation and downstream MAPK signaling. Involved in acrosome biogenesis through interaction with the spermatid ESCRT-0 complex and microtubules. Deubiquitinates BIRC6/bruce and KIF23/MKLP1. Deubiquitinates BACE1 which inhibits BACE1 lysosomal degradation and modulates BACE-mediated APP cleavage and amyloid-beta formation. The protein is Ubiquitin carboxyl-terminal hydrolase 8 of Homo sapiens (Human).